We begin with the raw amino-acid sequence, 1454 residues long: Serine/threonine-protein kinase VPS15 (1454 aa).

The N-myristoyl glycine moiety is linked to residue Gly-2. A Protein kinase domain is found at 27-300; it reads VHYVSQLNSS…LLNKYRGIFF (274 aa). ATP-binding positions include 33 to 41 and Lys-54; that span reads LNSSRFLKT. Asp-147 acts as the Proton acceptor in catalysis. HEAT repeat units lie at residues 460-497, 576-613, 615-652, and 654-691; these read NKIDRVVPYFVCCFEDSDQDVQALSLLTLIQVLTSVRK, KLIQSVEDLTVSFLTDNDTYVKMALLQNILPLCKFFGR, RTNDIILSHLITYLNDKDPALRVSLIQTISGISILLGT, and TLEQYILPLLIQTITDSEELVVISVLQSLKSLFKTGLI. WD repeat units follow at residues 1078 to 1118, 1126 to 1165, 1229 to 1268, 1275 to 1315, 1344 to 1382, and 1422 to 1454; these read NEPN…VGEV, DCSSTVTQITMIPNFDAFAVSSKDGQIIVLKVNHYQQESE, PRHGAVSSICIDEECCVLILGTTRGIIDIWDIRFNVLIRS, APIT…CQYA, RSLNALSTISVSNDKILLTDEATSSIVMFSLNELSSSKA, and YHHDIINSISTCEVDETPLLVACDNSGLIGIFQ.

The protein belongs to the protein kinase superfamily. Ser/Thr protein kinase family. In terms of assembly, component of the autophagy-specific VPS34 PI3-kinase complex I composed of VPS15, VPS30, VPS34, ATG14 and ATG38; and of the VPS34 PI3-kinase complex II composed of VPS15, VPS30, VPS34 and VPS38. Interacts directly with ATG14 and GPA1. Interacts directly with VPS34. In terms of processing, autophosphorylated.

It localises to the golgi apparatus. It is found in the trans-Golgi network membrane. The protein localises to the endosome membrane. The enzyme catalyses L-seryl-[protein] + ATP = O-phospho-L-seryl-[protein] + ADP + H(+). It catalyses the reaction L-threonyl-[protein] + ATP = O-phospho-L-threonyl-[protein] + ADP + H(+). Its function is as follows. Serine/threonine-protein kinase required for cytoplasm to vacuole transport (Cvt) and autophagy as a part of the autophagy-specific VPS34 PI3-kinase complex I. This complex is essential to recruit the ATG8-phosphatidylinositol conjugate and the ATG12-ATG5 conjugate to the pre-autophagosomal structure. Is also involved in endosome-to-Golgi retrograde transport as part of the VPS34 PI3-kinase complex II. This second complex is required for the endosome-to-Golgi retrieval of PEP1 and KEX2, and the recruitment of VPS5 and VPS7, two components of the retromer complex, to endosomal membranes (probably through the synthesis of a specific pool of phosphatidylinositol 3-phosphate recruiting the retromer to the endosomes). By regulating VPS34 kinase activity, VPS15 appears to be essential for the efficient delivery of soluble hydrolases to the yeast vacuole. May function as a G protein beta subunit to propagate the pheromone response at the endosome with GPA1. In Saccharomyces cerevisiae (strain ATCC 204508 / S288c) (Baker's yeast), this protein is Serine/threonine-protein kinase VPS15.